The sequence spans 1436 residues: MAP kinase kinase kinase win1 (1436 aa).

The segment at Leu-56–Lys-85 is disordered. The span at Ser-76–Lys-85 shows a compositional bias: basic and acidic residues. Ser-224 bears the Phosphoserine mark. Thr-226 bears the Phosphothreonine mark. Residues Glu-282–Gly-1123 form an interaction with tea4 region. The Protein kinase domain maps to Trp-1120–Val-1406. ATP-binding positions include Ile-1126–Val-1134 and Lys-1149. The Proton acceptor role is filled by Asp-1244.

It belongs to the protein kinase superfamily. STE Ser/Thr protein kinase family. MAP kinase kinase kinase subfamily. In terms of assembly, interacts with tea4.

The enzyme catalyses L-seryl-[protein] + ATP = O-phospho-L-seryl-[protein] + ADP + H(+). The catalysed reaction is L-threonyl-[protein] + ATP = O-phospho-L-threonyl-[protein] + ADP + H(+). Involved in a signal transduction pathway that is activated by changes in the osmolarity of the extracellular environment. Activates the wis1 MAP kinase kinase by phosphorylation. The protein is MAP kinase kinase kinase win1 (win1) of Schizosaccharomyces pombe (strain 972 / ATCC 24843) (Fission yeast).